A 319-amino-acid polypeptide reads, in one-letter code: Nucleotide-binding protein Mvan_2698 (319 aa).

Basic and acidic residues predominate over residues 1–12; sequence MTEQGMHQELRE. Residues 1-26 are disordered; that stretch reads MTEQGMHQELREGAGTAGDEGGLEAA. 43–50 lines the ATP pocket; sequence GLSGAGRG. Position 94–97 (94–97) interacts with GTP; it reads DVRS.

Belongs to the RapZ-like family.

In terms of biological role, displays ATPase and GTPase activities. This is Nucleotide-binding protein Mvan_2698 from Mycolicibacterium vanbaalenii (strain DSM 7251 / JCM 13017 / BCRC 16820 / KCTC 9966 / NRRL B-24157 / PYR-1) (Mycobacterium vanbaalenii).